We begin with the raw amino-acid sequence, 623 residues long: MQDNETDGRDVPTGHAVIQGYLKTLDGSPGVYRMLDAQSQVLYVGKARNLRARVSNYARPSGHSGRIARMIRETASMMFLTTRTETEALLLEQNLIKQLKPRYNVLLRDDKSFPNILIAKDHPFPMLKKHRGKKSEKGSYFGPFASAGAVNRTLNQLQRVFLLRTCSDATFESRTRPCLLFQIKRCSAPCVGRVPAEDYAELIGDAERFLQGRTTKVQANLAEQMQAASEAMEFERAAALRDRIKALTQVQSSQGINPRGVAEADVIAVHLEGGQACVQVFFIRANQSWGNRDFFPRTGAGAEEPEILEAFLAQFYDDKEPPRMILLSHPVDNPDLVGQLLSERAGRKVTLGVPQRGEKAELVENAARNARESLARRMAESATQNRLLAGLAEAFELDAAPKRIEVYDNSHIQGTNAVGGMIVAGPEGFLKSQYRKFNIRGAAGAQGDDFGMMKEVLTRRFERLLKEDPERKTDAWPDLLLIDGGAGQVSAVQEILQELGVDDVPFIGVAKGIDRDAGKEEFHRPGEPPFALRMNDPVLYFVQRLRDEAHRWAIGAHRAKRAKAVSATPLDEIPGVGAARKRALLAHFGSAKAVARAGVPDLCAVEGISETMAQSIHDYFHGS.

Residues Gly27 to Val105 form the GIY-YIG domain. Residues Thr215 to Val250 form the UVR domain.

It belongs to the UvrC family. Interacts with UvrB in an incision complex.

The protein localises to the cytoplasm. The UvrABC repair system catalyzes the recognition and processing of DNA lesions. UvrC both incises the 5' and 3' sides of the lesion. The N-terminal half is responsible for the 3' incision and the C-terminal half is responsible for the 5' incision. The sequence is that of UvrABC system protein C from Cereibacter sphaeroides (strain ATCC 17023 / DSM 158 / JCM 6121 / CCUG 31486 / LMG 2827 / NBRC 12203 / NCIMB 8253 / ATH 2.4.1.) (Rhodobacter sphaeroides).